The sequence spans 403 residues: N-isopropylammelide isopropyl amidohydrolase (403 aa).

Zn(2+) is bound by residues His-60, His-62, and His-217. His-249 acts as the Proton donor/acceptor in catalysis. Asp-303 contacts Zn(2+).

This sequence belongs to the metallo-dependent hydrolases superfamily. N-acyl-D-amino-acid deacylase family. Homotetramer. Zn(2+) is required as a cofactor.

It is found in the cytoplasm. It carries out the reaction N-isopropylammelide + H2O + H(+) = isopropylamine + cyanurate. It functions in the pathway xenobiotic degradation; atrazine degradation; cyanurate from atrazine: step 3/3. Inhibited by N-ethylammeline, N-hydroxyethylammeline, N-isopropylammeline, ammeline and 2-amino-4hydroxy-1,3,5-s-triazine. Transforms N-isopropylammelide to cyanuric acid and isopropylamine. The sequence is that of N-isopropylammelide isopropyl amidohydrolase (atzC) from Pseudomonas sp. (strain ADP).